The chain runs to 616 residues: ATP-dependent zinc metalloprotease FtsH (616 aa).

Topologically, residues 1 to 8 (MRNLFKTA) are cytoplasmic. The chain crosses the membrane as a helical span at residues 9–29 (TIYILIALVILLLVDIFSGGL). The Extracellular segment spans residues 30–114 (SYNQFFSNLS…VTKEPPQVPW (85 aa)). A helical transmembrane segment spans residues 115-135 (WLSTFLPMLIFAGLMIFVWIF). Residues 136-616 (MLQQTQGGGS…VFEDAQPQLV (481 aa)) lie on the Cytoplasmic side of the membrane. Residue 208–215 (GPPGTGKT) participates in ATP binding. H430 serves as a coordination point for Zn(2+). E431 is an active-site residue. 2 residues coordinate Zn(2+): H434 and D506.

It in the central section; belongs to the AAA ATPase family. This sequence in the C-terminal section; belongs to the peptidase M41 family. As to quaternary structure, homohexamer. Zn(2+) is required as a cofactor.

It localises to the cell membrane. In terms of biological role, acts as a processive, ATP-dependent zinc metallopeptidase for both cytoplasmic and membrane proteins. Plays a role in the quality control of integral membrane proteins. The polypeptide is ATP-dependent zinc metalloprotease FtsH (Caldicellulosiruptor bescii (strain ATCC BAA-1888 / DSM 6725 / KCTC 15123 / Z-1320) (Anaerocellum thermophilum)).